Consider the following 579-residue polypeptide: Putative fatty-acid--CoA ligase fadD21 (579 aa).

The protein belongs to the ATP-dependent AMP-binding enzyme family.

In Mycobacterium leprae (strain TN), this protein is Putative fatty-acid--CoA ligase fadD21 (fadD21).